Consider the following 102-residue polypeptide: Large ribosomal subunit protein bL21 (102 aa).

This sequence belongs to the bacterial ribosomal protein bL21 family. Part of the 50S ribosomal subunit. Contacts protein L20.

In terms of biological role, this protein binds to 23S rRNA in the presence of protein L20. This is Large ribosomal subunit protein bL21 from Geotalea daltonii (strain DSM 22248 / JCM 15807 / FRC-32) (Geobacter daltonii).